The following is a 338-amino-acid chain: Envelope glycoprotein K (338 aa).

The first 30 residues, 1 to 30, serve as a signal peptide directing secretion; that stretch reads MLAVRSLQHLSTVVLITAYGLVLVWYTVFG. The Extracellular portion of the chain corresponds to 31-121; the sequence is ASPLHRCIYA…VNCLETLWYT (91 aa). An involved in fusion region spans residues 31 to 121; that stretch reads ASPLHRCIYA…VNCLETLWYT (91 aa). 2 N-linked (GlcNAc...) asparagine; by host glycosylation sites follow: asparagine 48 and asparagine 58. A helical membrane pass occupies residues 122 to 140; sequence RVRLVVVGWFLYLAFVALH. The Cytoplasmic portion of the chain corresponds to 141–212; sequence QRRCMFGVVS…DPVTFLYHRP (72 aa). The helical transmembrane segment at 213 to 233 threads the bilayer; the sequence is AIGVIVGCELIVRFVAVGLIV. Residues 234–243 are Extracellular-facing; sequence GTAFISRGAC. The helical transmembrane segment at 244–264 threads the bilayer; sequence AITYPLFLTITTWCFVSTIGL. The Cytoplasmic portion of the chain corresponds to 265–301; that stretch reads TELYCILRRGPAPKNADKAAAPGRSKGLSGVCGRCCS. The segment at 265–301 is interaction with UL20; that stretch reads TELYCILRRGPAPKNADKAAAPGRSKGLSGVCGRCCS. Residues 302-322 traverse the membrane as a helical segment; that stretch reads IILSGIAMRLCYIAVVAGVVL. The Extracellular segment spans residues 323 to 338; that stretch reads VALHYEQEIQRRLFDV.

Belongs to the alphaherpesvirinae glycoprotein K family. In terms of assembly, interacts (via UL20 interaction region) with protein UL20 (via N-terminus); this interaction probably plays a role in the coordinate transport of protein UL20 and gK to the trans-Golgi network (TGN), and is required for the cell surface expression of gK. Post-translationally, N-glycosylated.

It localises to the host cell membrane. The protein resides in the host endosome membrane. The protein localises to the host Golgi apparatus membrane. Functionally, glycoprotein that probably modulates membrane fusion events during secondary envelopment of cytoplasmic capsids that bud into specific trans-Golgi network (TGN)-derived membranes. Also plays a role, together with gB, in virus-induced cell-to-cell fusion (syncytia formation). Seems to block fusion of virions with infected-cell membranes. The protein is Envelope glycoprotein K (gK) of Homo sapiens (Human).